A 338-amino-acid chain; its full sequence is Phenylalanine--tRNA ligase alpha subunit (338 aa).

E252 lines the Mg(2+) pocket.

This sequence belongs to the class-II aminoacyl-tRNA synthetase family. Phe-tRNA synthetase alpha subunit type 1 subfamily. Tetramer of two alpha and two beta subunits. Requires Mg(2+) as cofactor.

The protein resides in the cytoplasm. It catalyses the reaction tRNA(Phe) + L-phenylalanine + ATP = L-phenylalanyl-tRNA(Phe) + AMP + diphosphate + H(+). This Pseudomonas fluorescens (strain ATCC BAA-477 / NRRL B-23932 / Pf-5) protein is Phenylalanine--tRNA ligase alpha subunit.